We begin with the raw amino-acid sequence, 956 residues long: DNA repair endonuclease UVH1 (956 aa).

Residues 256–272 (RRQLDPIWHTLGKRTKQ) carry the Nuclear localization signal motif. Disordered regions lie at residues 343–363 (HVKN…SVEA), 516–593 (TTDM…RPSG), and 697–718 (SSTE…GGRK). Residues 697-711 (SSTEFPASSTQNSLT) are compositionally biased toward polar residues. The 81-residue stretch at 725–805 (QVIVDMREFM…IPVLLIEFSQ (81 aa)) folds into the ERCC4 domain.

It belongs to the XPF family. Heterodimer with ERCC1/RAD10. Isoform 1 and isoform 2 are widely expressed, predominantly in flowers, meristems and stems. Isoform 3 is detected at low levels.

The protein resides in the nucleus. In terms of biological role, seems to be involved in nucleotide excision repair (NER) of damaged DNA (dark repair mechanism). Involved in repair of UV light, and probably oxidative damage. The UVH1/RAD1-ERCC1/RAD10 complex may act as an endonuclease making DNA incision 5' to the lesion site. In vitro, is implicated in double strand breaks (DSBs) repair and is required for homologous recombination in the presence of non-homologous overhangs. May mediate the induction of a DNA-damage sensitive cell-cycle checkpoint during the G2 phase. This is DNA repair endonuclease UVH1 (UVH1) from Arabidopsis thaliana (Mouse-ear cress).